The following is a 591-amino-acid chain: L-fucose isomerase (591 aa).

Catalysis depends on proton acceptor residues E337 and D361. Mn(2+) is bound by residues E337, D361, and H528.

This sequence belongs to the L-fucose isomerase family. In terms of assembly, homohexamer. Mn(2+) is required as a cofactor.

It localises to the cytoplasm. The catalysed reaction is L-fucose = L-fuculose. Its pathway is carbohydrate degradation; L-fucose degradation; L-lactaldehyde and glycerone phosphate from L-fucose: step 1/3. In terms of biological role, converts the aldose L-fucose into the corresponding ketose L-fuculose. The protein is L-fucose isomerase of Salmonella arizonae (strain ATCC BAA-731 / CDC346-86 / RSK2980).